A 92-amino-acid chain; its full sequence is Defensin alpha 4 (92 aa).

Positions 1-19 (MKTLVLLSALVLLAFQVQA) are cleaved as a signal peptide. Positions 20-58 (DPIQNTDEETKTEEQPGEEDQAVSISFGGQEGSALHEKS) are excised as a propeptide. A disordered region spans residues 23–42 (QNTDEETKTEEQPGEEDQAV). 3 cysteine pairs are disulfide-bonded: Cys64–Cys89, Cys66–Cys81, and Cys71–Cys88.

Belongs to the alpha-defensin family. In terms of tissue distribution, paneth cells of the small bowel.

It localises to the secreted. Its subcellular location is the cytoplasmic vesicle. The protein resides in the secretory vesicle. In terms of biological role, host-defense peptide that has antimicrobial activity. Exhibits activity against Gram-negative E.coli (in vitro). Probably contributes to the antimicrobial barrier function of the small bowel mucosa. The sequence is that of Defensin alpha 4 from Mus musculus (Mouse).